We begin with the raw amino-acid sequence, 577 residues long: Myb-like protein N (577 aa).

Disordered regions lie at residues 1 to 23 (MMTI…NIYT), 206 to 225 (TPFS…SPLN), and 240 to 264 (SSSS…LSSS). Low complexity predominate over residues 213 to 225 (PNSPNSTSSSPLN). HTH myb-type domains lie at 403–465 (KKST…CPAI) and 466–517 (RKGS…SREV). 2 consecutive DNA-binding regions (H-T-H motif) follow at residues 437 to 461 (WKKI…KRVL) and 489 to 513 (WKNV…KSCM). Residues 518-570 (PWTPKEDEILQKKVIENKQDSTKEIGWMDLSKAMARARQTKIPRTALECKIRF) enclose the Myb-like domain.

It is found in the nucleus. This Dictyostelium discoideum (Social amoeba) protein is Myb-like protein N (mybN).